A 185-amino-acid chain; its full sequence is MINDILKDAENRMKKSLEVLADDLAKIRTGRAQPDLLAHVTIDYYGVETPITQAANITVLDARTLGITPWEKGLSSKIEKAILTSDLGLNPTNLGDSLRVPMPALNEERRKELVKLVKSETEAGRVSIRNIRRDANGDIKELLKEKEITEDQAKKAEDDIQKITDKMIAQADALAAKKEQDLMAV.

This sequence belongs to the RRF family.

It localises to the cytoplasm. Functionally, responsible for the release of ribosomes from messenger RNA at the termination of protein biosynthesis. May increase the efficiency of translation by recycling ribosomes from one round of translation to another. The protein is Ribosome-recycling factor of Francisella tularensis subsp. tularensis (strain FSC 198).